Consider the following 211-residue polypeptide: MVKKKKEKEKSKEIEEMDREIQNGAYSGRVMTEEQMEILRKQIAVYAVICDQLVLLHNSLSSYHPLSSGVRPMVGGYFDPMGASSSSHRISTRHRWTPTSTQLQILESIYDEGSGTPNRRRIREIATELSEHGQITETNVYNWFQNRRARSKRKQPQTTTANGQADDVAVTTEERRSCGDSGGLESYEHILFPSPDLGIEHLLSIGKFMET.

Residues 91–155 constitute a DNA-binding region (homeobox; WUS-type); the sequence is STRHRWTPTS…NRRARSKRKQ (65 aa). Positions 147–183 are disordered; that stretch reads RRARSKRKQPQTTTANGQADDVAVTTEERRSCGDSGG.

Belongs to the WUS homeobox family. In terms of tissue distribution, expressed in root vasculature, pericycle and stamen. Expressed in the procambium during stem maturation.

The protein localises to the nucleus. Its function is as follows. Acts redundantly with WOX4 downstream of the TDR/PXY receptor kinase to regulate procambial cell proliferation and differentiation in vascular tissue, independently of any role in vascular. Involved in the regulation of gibberellin (GA) biosynthesis pathway. Positively regulates the expression of the GA biosynthesis gene GA3OX1, and negatively regulates the expression of GA2OX1 during secondary growth, which increases bioactive GA content in the inflorescence stem. Promotes vascular cell differentiation in the inflorescence stem. In terms of biological role, transcription factor which may be involved in developmental processes. This Arabidopsis thaliana (Mouse-ear cress) protein is WUSCHEL-related homeobox 14 (WOX14).